Here is a 431-residue protein sequence, read N- to C-terminus: Shaggy-related protein kinase beta (431 aa).

Positions 12 to 24 (SGRNFVSSDNVGE) are enriched in polar residues. A disordered region spans residues 12–65 (SGRNFVSSDNVGETETPRSKPNQNREETESTETTSYEKDSVSSSENSDHLPKEI). Basic and acidic residues-rich tracts occupy residues 26–39 (ETPRSKPNQNREET) and 46–65 (SYEKDSVSSSENSDHLPKEI). The 285-residue stretch at 102 to 386 (YRAEHVIGTG…ALEACAHPFF (285 aa)) folds into the Protein kinase domain. Residues 108 to 116 (IGTGSFGVV) and Lys-131 contribute to the ATP site. The Proton acceptor role is filled by Asp-227. The residue at position 262 (Tyr-262) is a Phosphotyrosine.

This sequence belongs to the protein kinase superfamily. CMGC Ser/Thr protein kinase family. GSK-3 subfamily. In terms of processing, autophosphorylated mainly on threonine and serine residues.

It carries out the reaction L-seryl-[protein] + ATP = O-phospho-L-seryl-[protein] + ADP + H(+). It catalyses the reaction L-threonyl-[protein] + ATP = O-phospho-L-threonyl-[protein] + ADP + H(+). In terms of biological role, may mediate extracellular signals to regulate transcription in differentiating cells. The protein is Shaggy-related protein kinase beta of Arabidopsis thaliana (Mouse-ear cress).